The chain runs to 389 residues: Phospho-N-acetylmuramoyl-pentapeptide-transferase (389 aa).

10 helical membrane passes run 25-45, 74-94, 97-117, 134-154, 190-210, 222-242, 259-279, 286-306, 311-331, and 366-386; these read RAVMANLTALVIGLAAGPWVI, MGGVLVLVSIAISTVLWCDWG, FIWVVMLVTLGYGAIGWVDDY, FFWQTLIGLVAAVYLAFSVSE, VSYPLGVAGFIVLTYLVIVGS, GLVIMPVVLVGGALGAFAYVM, AGELLIFCSAMAGAGLAFLWF, VFMGDVGALALGGALGTVAVI, IVLFVMGGIFVVETVSVMLQV, and QVTVRFWIVTMLLVLIGLSTL.

It belongs to the glycosyltransferase 4 family. MraY subfamily. The cofactor is Mg(2+).

It localises to the cell inner membrane. It catalyses the reaction UDP-N-acetyl-alpha-D-muramoyl-L-alanyl-gamma-D-glutamyl-meso-2,6-diaminopimeloyl-D-alanyl-D-alanine + di-trans,octa-cis-undecaprenyl phosphate = di-trans,octa-cis-undecaprenyl diphospho-N-acetyl-alpha-D-muramoyl-L-alanyl-D-glutamyl-meso-2,6-diaminopimeloyl-D-alanyl-D-alanine + UMP. Its pathway is cell wall biogenesis; peptidoglycan biosynthesis. Its function is as follows. Catalyzes the initial step of the lipid cycle reactions in the biosynthesis of the cell wall peptidoglycan: transfers peptidoglycan precursor phospho-MurNAc-pentapeptide from UDP-MurNAc-pentapeptide onto the lipid carrier undecaprenyl phosphate, yielding undecaprenyl-pyrophosphoryl-MurNAc-pentapeptide, known as lipid I. The protein is Phospho-N-acetylmuramoyl-pentapeptide-transferase of Cupriavidus pinatubonensis (strain JMP 134 / LMG 1197) (Cupriavidus necator (strain JMP 134)).